A 134-amino-acid chain; its full sequence is Profilin-4 (134 aa).

Cysteine 13 and cysteine 118 are disulfide-bonded. The short motif at 84–100 is the Involved in PIP2 interaction element; the sequence is AVIRGKKGSGGITIKKT. Threonine 114 carries the phosphothreonine modification.

The protein belongs to the profilin family. As to quaternary structure, occurs in many kinds of cells as a complex with monomeric actin in a 1:1 ratio. Post-translationally, phosphorylated by MAP kinases.

Its subcellular location is the cytoplasm. It is found in the cytoskeleton. Binds to actin and affects the structure of the cytoskeleton. At high concentrations, profilin prevents the polymerization of actin, whereas it enhances it at low concentrations. The sequence is that of Profilin-4 from Olea europaea (Common olive).